Here is a 211-residue protein sequence, read N- to C-terminus: Molybdenum cofactor guanylyltransferase (211 aa).

GTP contacts are provided by residues 12–14 (LAG), Lys25, Asn55, Asp73, and Asp103. Asp103 provides a ligand contact to Mg(2+).

This sequence belongs to the MobA family. Monomer. Mg(2+) serves as cofactor.

The protein localises to the cytoplasm. The catalysed reaction is Mo-molybdopterin + GTP + H(+) = Mo-molybdopterin guanine dinucleotide + diphosphate. In terms of biological role, transfers a GMP moiety from GTP to Mo-molybdopterin (Mo-MPT) cofactor (Moco or molybdenum cofactor) to form Mo-molybdopterin guanine dinucleotide (Mo-MGD) cofactor. The sequence is that of Molybdenum cofactor guanylyltransferase from Albidiferax ferrireducens (strain ATCC BAA-621 / DSM 15236 / T118) (Rhodoferax ferrireducens).